A 135-amino-acid chain; its full sequence is MKMIEVVAAIIERDGKILLAQRPAQSDQAGLWEFAGGKVEPDESQRQALVRELREELGIEATVGEYVASHQREVSGRIIHLHAWHVPDFHGTLQAHEHQALVWCSPEEALQYPLAPADIPLLEAFMALRAARPAD.

The 126-residue stretch at 2-127 (KMIEVVAAII…DIPLLEAFMA (126 aa)) folds into the Nudix hydrolase domain. Substrate contacts are provided by residues 34 to 39 (FAGGKV), Arg-72, and Asp-118. The Nudix box signature appears at 37–58 (GKVEPDESQRQALVRELREELG).

Belongs to the Nudix hydrolase family. Monomer. Mg(2+) is required as a cofactor. Mn(2+) serves as cofactor.

It catalyses the reaction CTP + H2O = CMP + diphosphate + H(+). It carries out the reaction dCTP + H2O = dCMP + diphosphate + H(+). Hydrolase with a preference for pyrimidine substrates. Has high activity with 5-methyl-dCTP, and much lower activity with CTP, dCTP, 5-hydroxy-dCTP, 2-hydroxy-dATP and 8-hydroxy-dGTP. This is CTP pyrophosphohydrolase (nudG) from Escherichia coli (strain K12).